An 87-amino-acid chain; its full sequence is Small ribosomal subunit protein uS17 (87 aa).

It belongs to the universal ribosomal protein uS17 family. In terms of assembly, part of the 30S ribosomal subunit.

In terms of biological role, one of the primary rRNA binding proteins, it binds specifically to the 5'-end of 16S ribosomal RNA. This is Small ribosomal subunit protein uS17 from Geobacillus kaustophilus (strain HTA426).